Here is a 111-residue protein sequence, read N- to C-terminus: Large ribosomal subunit protein uL22 (111 aa).

This sequence belongs to the universal ribosomal protein uL22 family. Part of the 50S ribosomal subunit.

Functionally, this protein binds specifically to 23S rRNA; its binding is stimulated by other ribosomal proteins, e.g. L4, L17, and L20. It is important during the early stages of 50S assembly. It makes multiple contacts with different domains of the 23S rRNA in the assembled 50S subunit and ribosome. In terms of biological role, the globular domain of the protein is located near the polypeptide exit tunnel on the outside of the subunit, while an extended beta-hairpin is found that lines the wall of the exit tunnel in the center of the 70S ribosome. This is Large ribosomal subunit protein uL22 from Chlamydia trachomatis serovar L2 (strain ATCC VR-902B / DSM 19102 / 434/Bu).